The primary structure comprises 842 residues: Gamma-aminobutyric acid type B receptor subunit 2 (842 aa).

The N-terminal stretch at 1 to 17 is a signal peptide; the sequence is MSRWLSLLLFAVQAVGG. At 18–438 the chain is on the extracellular side; that stretch reads YEAGEELSCK…TERRREHISS (421 aa). 4 N-linked (GlcNAc...) asparagine glycosylation sites follow: Asn274, Asn279, Asn327, and Asn366. The helical transmembrane segment at 439-459 threads the bilayer; that stretch reads ILFLAMSLLALIGIFLALIFL. The Cytoplasmic segment spans residues 460-477; it reads LINFRYRNHRFIKMSSPN. A helical transmembrane segment spans residues 478 to 498; that stretch reads LNNIIIAGSICTFASVIMLGL. The Extracellular segment spans residues 499–506; the sequence is DTRIVSPD. A helical transmembrane segment spans residues 507–527; sequence VFVWLCYTKTWTLCIGFTLSF. Residues 528–556 are Cytoplasmic-facing; the sequence is GAMFSKTWRVHSIFTNIRMDRKAIKDSKL. A helical membrane pass occupies residues 557–577; that stretch reads FIILGILLFIDICVLVTWAFV. At 578–610 the chain is on the extracellular side; that stretch reads SPFSYTVTELPHIPEDNIVIIPEVEKCNSSHSG. N-linked (GlcNAc...) asparagine glycosylation occurs at Asn605. Residues 611–631 form a helical membrane-spanning segment; it reads VFQAVLYAVKGVLMILGCFLA. The Cytoplasmic portion of the chain corresponds to 632-647; that stretch reads WETRHVNVPALNDSKY. Residues 648-668 form a helical membrane-spanning segment; that stretch reads IGTSVYCCVVMSVLGLSTSVI. Residues 669-676 lie on the Extracellular side of the membrane; it reads LQERVNEM. Residues 677–697 traverse the membrane as a helical segment; sequence FSLASFFVIFSTTLTLCLVFV. The Cytoplasmic portion of the chain corresponds to 698-842; it reads PKVIELARNP…VDPDEPSTKL (145 aa). A compositionally biased stretch (polar residues) spans 725-740; the sequence is AKTSQPMSPQPRSDSS. 2 disordered regions span residues 725–744 and 791–842; these read AKTS…GDLI and SPSS…STKL.

Belongs to the G-protein coupled receptor 3 family. In terms of assembly, may form a heterodimer with gbb-1. In terms of tissue distribution, expressed in cholinergic motor neurons.

It is found in the cell membrane. In terms of biological role, component of a heterodimeric G-protein coupled receptor for GABA, formed by gbb-1 and gbb-2. Within the heterodimeric GABA receptor, only gbb-1 seems to bind agonists, while gbb-2 mediates coupling to G proteins. Ligand binding causes a conformation change that triggers signaling via guanine nucleotide-binding proteins (G proteins) and modulates the activity of down-stream effectors, such as adenylate cyclase. Signaling inhibits adenylate cyclase, stimulates phospholipase A2, activates potassium channels, inactivates voltage-dependent calcium-channels and modulates inositol phospholipid hydrolysis. Plays a critical role in the fine-tuning of inhibitory synaptic transmission. Pre-synaptic GABA receptor inhibits neurotransmitter release by down-regulating high-voltage activated calcium channels, whereas postsynaptic GABA receptor decreases neuronal excitability by activating a prominent inwardly rectifying potassium (Kir) conductance that underlies the late inhibitory postsynaptic potentials. Along with gbb-1, may couple to the G(o)-alpha G-protein goa-1 to negatively regulate cholinergic receptor activity in the presence of high levels of acetylcholine in ventral cord motor neurons. As acetylcholine depolarizes body wall muscles, modulation of acetylcholine levels most likely results in the control of locomotory behavior. Regulates locomotory behavior in response to GABA release by GABAergic motor neurons. The sequence is that of Gamma-aminobutyric acid type B receptor subunit 2 from Caenorhabditis elegans.